Consider the following 145-residue polypeptide: D-aminoacyl-tRNA deacylase (145 aa).

The short motif at G137–P138 is the Gly-cisPro motif, important for rejection of L-amino acids element.

The protein belongs to the DTD family. Homodimer.

Its subcellular location is the cytoplasm. The enzyme catalyses glycyl-tRNA(Ala) + H2O = tRNA(Ala) + glycine + H(+). It carries out the reaction a D-aminoacyl-tRNA + H2O = a tRNA + a D-alpha-amino acid + H(+). Functionally, an aminoacyl-tRNA editing enzyme that deacylates mischarged D-aminoacyl-tRNAs. Also deacylates mischarged glycyl-tRNA(Ala), protecting cells against glycine mischarging by AlaRS. Acts via tRNA-based rather than protein-based catalysis; rejects L-amino acids rather than detecting D-amino acids in the active site. By recycling D-aminoacyl-tRNA to D-amino acids and free tRNA molecules, this enzyme counteracts the toxicity associated with the formation of D-aminoacyl-tRNA entities in vivo and helps enforce protein L-homochirality. The chain is D-aminoacyl-tRNA deacylase from Shewanella sediminis (strain HAW-EB3).